Reading from the N-terminus, the 195-residue chain is Heterogeneous nuclear ribonucleoprotein A/B (195 aa).

Positions 1–23 are disordered; it reads EEVADGQAHGEXVYREEHHEGEK. Residues 12–23 are compositionally biased toward basic and acidic residues; that stretch reads XVYREEHHEGEK. Residues 32–48 form the RRM domain; that stretch reads EETKLFVGALSWETTEK. Asymmetric dimethylarginine occurs at positions 119 and 122. Ser173 carries the phosphoserine; by CK2 modification.

In terms of processing, extensively phosphorylated on tyrosine residues.

It is found in the cytoplasm. Its subcellular location is the nucleus. May regulate mRNA translation and stability. It binds to poly(A) and poly(U) regions of RNA. This binding is inhibited when the protein is phosphorylated. The protein is Heterogeneous nuclear ribonucleoprotein A/B of Artemia salina (Brine shrimp).